Here is a 412-residue protein sequence, read N- to C-terminus: Translation initiation factor 2 subunit gamma (412 aa).

Residues 8–205 (QAEMNIGMVG…AMYEHFEPPE (198 aa)) form the tr-type G domain. Positions 17-24 (GHVDHGKT) are G1. The Mg(2+) site is built by aspartate 20, threonine 24, glycine 45, and serine 47. 20–25 (DHGKTT) serves as a coordination point for GTP. The interval 45–49 (GISIR) is G2. 4 residues coordinate Zn(2+): cysteine 60, cysteine 63, cysteine 72, and cysteine 75. The segment at 89–92 (DSPG) is G3. GTP-binding positions include 145 to 148 (NKID) and 183 to 185 (SAQ). A G4 region spans residues 145–148 (NKID). The tract at residues 183–185 (SAQ) is G5.

The protein belongs to the TRAFAC class translation factor GTPase superfamily. Classic translation factor GTPase family. EIF2G subfamily. As to quaternary structure, heterotrimer composed of an alpha, a beta and a gamma chain. Requires Mg(2+) as cofactor.

The catalysed reaction is GTP + H2O = GDP + phosphate + H(+). Functionally, eIF-2 functions in the early steps of protein synthesis by forming a ternary complex with GTP and initiator tRNA. This chain is Translation initiation factor 2 subunit gamma, found in Methanopyrus kandleri (strain AV19 / DSM 6324 / JCM 9639 / NBRC 100938).